The following is a 190-amino-acid chain: Peptidyl-prolyl cis-trans isomerase A (190 aa).

The N-terminal stretch at 1–24 (MLKSTLAAVAAVFALSALSPAALA) is a signal peptide. Residues 27 to 188 (GDPHVLLTTS…KPVVILSAKV (162 aa)) form the PPIase cyclophilin-type domain.

The protein belongs to the cyclophilin-type PPIase family.

The protein localises to the periplasm. The enzyme catalyses [protein]-peptidylproline (omega=180) = [protein]-peptidylproline (omega=0). PPIases accelerate the folding of proteins. It catalyzes the cis-trans isomerization of proline imidic peptide bonds in oligopeptides. The chain is Peptidyl-prolyl cis-trans isomerase A (ppiA) from Salmonella typhimurium (strain LT2 / SGSC1412 / ATCC 700720).